A 153-amino-acid chain; its full sequence is Large ribosomal subunit protein uL22 (153 aa).

It belongs to the universal ribosomal protein uL22 family. As to quaternary structure, part of the 50S ribosomal subunit.

Its function is as follows. This protein binds specifically to 23S rRNA. It makes multiple contacts with different domains of the 23S rRNA in the assembled 50S subunit and ribosome. The globular domain of the protein is located near the polypeptide exit tunnel on the outside of the subunit, while an extended beta-hairpin is found that lines the wall of the exit tunnel in the center of the 70S ribosome. The polypeptide is Large ribosomal subunit protein uL22 (Methanoculleus marisnigri (strain ATCC 35101 / DSM 1498 / JR1)).